We begin with the raw amino-acid sequence, 808 residues long: DNA ligase (808 aa).

The tract at residues 1 to 30 (MSISDDISPVPPAPVSEPNAGQDAGQDAAP) is disordered. Positions 18–30 (PNAGQDAGQDAAP) are enriched in low complexity. NAD(+) is bound by residues 61 to 65 (DAEYD), 110 to 111 (SL), and Asp141. Lys143 serves as the catalytic N6-AMP-lysine intermediate. NAD(+) contacts are provided by Arg164, Glu202, Lys334, and Lys358. Zn(2+)-binding residues include Cys453, Cys456, Cys471, and Cys476. The BRCT domain occupies 644–733 (EGSGPLAGLR…GGDVPEDGDG (90 aa)). A disordered region spans residues 720-808 (LEGRGGDVPE…PRKKDQHSLL (89 aa)). The span at 727-742 (VPEDGDGAPGNEDEAP) shows a compositional bias: acidic residues. Low complexity predominate over residues 746-773 (ADVPAAPEVLADAPAAISADASSGVAPG). Basic and acidic residues predominate over residues 779–792 (DRADMTDRTVRTDS).

The protein belongs to the NAD-dependent DNA ligase family. LigA subfamily. Requires Mg(2+) as cofactor. It depends on Mn(2+) as a cofactor.

The enzyme catalyses NAD(+) + (deoxyribonucleotide)n-3'-hydroxyl + 5'-phospho-(deoxyribonucleotide)m = (deoxyribonucleotide)n+m + AMP + beta-nicotinamide D-nucleotide.. Functionally, DNA ligase that catalyzes the formation of phosphodiester linkages between 5'-phosphoryl and 3'-hydroxyl groups in double-stranded DNA using NAD as a coenzyme and as the energy source for the reaction. It is essential for DNA replication and repair of damaged DNA. The chain is DNA ligase from Nitratidesulfovibrio vulgaris (strain DSM 19637 / Miyazaki F) (Desulfovibrio vulgaris).